The sequence spans 504 residues: MWIFYFPAVISVLIVTLYFYFTRTFNYWKKRNVRGPEPVVFFGNLKDSALRKKNMGVVMEELYNMFPEEKVIGIYRMTSPCLLVRDLEVIKHIMIKDFEVFSDRGLEFSKEGLGQNLFHADGDTWRTLRNRFTPIFTSGKLKNMFYLMNEGADNFIDHVSKECEKHQEFEIHTLLQTYTMSTISSCAFGVSYDTISDKLDTLAIVDKIISEPSYAIELDMMYPGLLPKLNLSIFPSVVHKFFKNLVNTIVTQRNGKPSGRNDFMDLILELRQMGEITSNKYGNNMSTLEITESVMCAQAFVFYIAGYETSATTMAYLTYQLALNPDIQNKLIAEIDEAIKANGGKVTYDTVKDMKYLNKVFDETLRMYSIVEPLQRKAIRDYKLPGTDVVIEKDTVVLISPRGIHYDPKYYDNPKQFNPERFFAEEVGKRHPCAYLPFGLGQRNCIGMRFGRLQSLLCITKLLSKFRLEPSKNTDRNLQVEPYRFIIGPKGGIRLNIVPRKDVS.

Cysteine 445 lines the heme pocket.

Belongs to the cytochrome P450 family. Heme is required as a cofactor.

The protein resides in the endoplasmic reticulum membrane. It localises to the microsome membrane. It catalyses the reaction an organic molecule + reduced [NADPH--hemoprotein reductase] + O2 = an alcohol + oxidized [NADPH--hemoprotein reductase] + H2O + H(+). This is Cytochrome P450 6B2 (CYP6B2) from Helicoverpa armigera (Cotton bollworm).